The chain runs to 346 residues: Biotin synthase (346 aa).

Residues 38 to 256 enclose the Radical SAM core domain; it reads QQVQVSTLLS…IAVARIMMPT (219 aa). 3 residues coordinate [4Fe-4S] cluster: cysteine 53, cysteine 57, and cysteine 60. Residues cysteine 97, cysteine 128, cysteine 188, and arginine 260 each contribute to the [2Fe-2S] cluster site.

This sequence belongs to the radical SAM superfamily. Biotin synthase family. As to quaternary structure, homodimer. Requires [4Fe-4S] cluster as cofactor. It depends on [2Fe-2S] cluster as a cofactor.

It carries out the reaction (4R,5S)-dethiobiotin + (sulfur carrier)-SH + 2 reduced [2Fe-2S]-[ferredoxin] + 2 S-adenosyl-L-methionine = (sulfur carrier)-H + biotin + 2 5'-deoxyadenosine + 2 L-methionine + 2 oxidized [2Fe-2S]-[ferredoxin]. The protein operates within cofactor biosynthesis; biotin biosynthesis; biotin from 7,8-diaminononanoate: step 2/2. Catalyzes the conversion of dethiobiotin (DTB) to biotin by the insertion of a sulfur atom into dethiobiotin via a radical-based mechanism. The protein is Biotin synthase of Salmonella choleraesuis (strain SC-B67).